Reading from the N-terminus, the 201-residue chain is MAKRVTGPEIEKLIQLLAKVPGLGPRSARRAALHLIKKKDQLLGPLSNAMGEAYDKVKICSRCGNVDTVDPCTVCTDTQRDQSIIIVVEDVSDLWALERAGAMNAAYHVLGGTLSPLDGIGPDDLNIRGLIDRIGEGGIRELIIAVNATVEGQTTAHYITDQLQGLNVKITRLAHGVPVGGELDYLDEGTLAAALRARTVI.

Residues 60-75 (CSRCGNVDTVDPCTVC) form a C4-type zinc finger. The 96-residue stretch at 83–178 (SIIIVVEDVS…KITRLAHGVP (96 aa)) folds into the Toprim domain.

It belongs to the RecR family.

In terms of biological role, may play a role in DNA repair. It seems to be involved in an RecBC-independent recombinational process of DNA repair. It may act with RecF and RecO. This Rhizobium leguminosarum bv. trifolii (strain WSM2304) protein is Recombination protein RecR.